Here is a 397-residue protein sequence, read N- to C-terminus: Purine ribonucleoside efflux pump NepI (397 aa).

The Cytoplasmic segment spans residues M1–A21. The chain crosses the membrane as a helical span at residues V22–L42. At L43–E54 the chain is on the periplasmic side. Residues G55–I75 traverse the membrane as a helical segment. Residues T76–R85 lie on the Cytoplasmic side of the membrane. A helical transmembrane segment spans residues Y86 to N106. Position 107 (S107) is a topological domain, periplasmic. The helical transmembrane segment at F108–M128 threads the bilayer. Topologically, residues S129 to S147 are cytoplasmic. Residues V148–G168 traverse the membrane as a helical segment. The Periplasmic portion of the chain corresponds to G169–N175. Residues V176–P196 form a helical membrane-spanning segment. Residues S197 to R215 lie on the Cytoplasmic side of the membrane. The chain crosses the membrane as a helical span at residues P216–F236. Residues T237 to T255 are Periplasmic-facing. The chain crosses the membrane as a helical span at residues L256–L276. Over K277 to K281 the chain is Cytoplasmic. A helical membrane pass occupies residues L282–G302. Residues S303–K305 lie on the Periplasmic side of the membrane. The helical transmembrane segment at T306 to W326 threads the bilayer. Residues S327–S343 are Cytoplasmic-facing. A helical membrane pass occupies residues I344–L364. Topologically, residues D365 to N366 are periplasmic. The chain crosses the membrane as a helical span at residues F367–V387. Topologically, residues A388 to S397 are cytoplasmic.

The protein belongs to the major facilitator superfamily. DHA1 family. NepI (TC 2.A.1.2.26) subfamily.

It is found in the cell inner membrane. The catalysed reaction is inosine(in) + H(+)(out) = inosine(out) + H(+)(in). It carries out the reaction guanosine(in) + H(+)(out) = guanosine(out) + H(+)(in). In terms of biological role, involved in the efflux of purine ribonucleosides, such as inosine and guanosine. The protein is Purine ribonucleoside efflux pump NepI of Salmonella enteritidis PT4 (strain P125109).